Reading from the N-terminus, the 631-residue chain is Phosphomethylpyrimidine synthase (631 aa).

Substrate is bound by residues Asn239, Met268, Tyr297, His333, 353 to 355 (SRG), 394 to 397 (DGLR), and Glu433. Position 437 (His437) interacts with Zn(2+). Substrate is bound at residue Tyr460. A Zn(2+)-binding site is contributed by His501. Residues Cys581, Cys584, and Cys589 each coordinate [4Fe-4S] cluster.

This sequence belongs to the ThiC family. Homodimer. [4Fe-4S] cluster serves as cofactor.

The enzyme catalyses 5-amino-1-(5-phospho-beta-D-ribosyl)imidazole + S-adenosyl-L-methionine = 4-amino-2-methyl-5-(phosphooxymethyl)pyrimidine + CO + 5'-deoxyadenosine + formate + L-methionine + 3 H(+). It participates in cofactor biosynthesis; thiamine diphosphate biosynthesis. In terms of biological role, catalyzes the synthesis of the hydroxymethylpyrimidine phosphate (HMP-P) moiety of thiamine from aminoimidazole ribotide (AIR) in a radical S-adenosyl-L-methionine (SAM)-dependent reaction. This Escherichia coli O8 (strain IAI1) protein is Phosphomethylpyrimidine synthase.